Here is a 938-residue protein sequence, read N- to C-terminus: Isoleucine--tRNA ligase (938 aa).

The short motif at 58-68 (PYANGSIHIGH) is the 'HIGH' region element. Glu561 contributes to the L-isoleucyl-5'-AMP binding site. The 'KMSKS' region signature appears at 602–606 (KMSKS). Residue Lys605 coordinates ATP. Positions 901, 904, 921, and 924 each coordinate Zn(2+).

Belongs to the class-I aminoacyl-tRNA synthetase family. IleS type 1 subfamily. In terms of assembly, monomer. The cofactor is Zn(2+).

It localises to the cytoplasm. The enzyme catalyses tRNA(Ile) + L-isoleucine + ATP = L-isoleucyl-tRNA(Ile) + AMP + diphosphate. In terms of biological role, catalyzes the attachment of isoleucine to tRNA(Ile). As IleRS can inadvertently accommodate and process structurally similar amino acids such as valine, to avoid such errors it has two additional distinct tRNA(Ile)-dependent editing activities. One activity is designated as 'pretransfer' editing and involves the hydrolysis of activated Val-AMP. The other activity is designated 'posttransfer' editing and involves deacylation of mischarged Val-tRNA(Ile). The protein is Isoleucine--tRNA ligase of Baumannia cicadellinicola subsp. Homalodisca coagulata.